We begin with the raw amino-acid sequence, 593 residues long: Gamma-humulene synthase (593 aa).

Residues 1-26 (MAQISESVSPSTDLKSTESSITSNRH) show a composition bias toward polar residues. Residues 1–34 (MAQISESVSPSTDLKSTESSITSNRHGNMWEDDR) form a disordered region. Residues Asp343, Asp347, Asp488, and Glu496 each coordinate Mg(2+). A DDXXD motif motif is present at residues 343–347 (DDLYD).

It belongs to the terpene synthase family. Tpsd subfamily. Mg(2+) is required as a cofactor. Requires K(+) as cofactor.

It localises to the cytoplasm. The enzyme catalyses (2E,6E)-farnesyl diphosphate = gamma-humulene + diphosphate. It catalyses the reaction (2E,6E)-farnesyl diphosphate = sibirene + diphosphate. The catalysed reaction is (2E,6E)-farnesyl diphosphate = longifolene + diphosphate. It carries out the reaction (2E,6E)-farnesyl diphosphate = beta-himachalene + diphosphate. The enzyme catalyses (2E,6E)-farnesyl diphosphate = gamma-himachalene + diphosphate. It catalyses the reaction (2E,6E)-farnesyl diphosphate = alpha-himachalene + diphosphate. It functions in the pathway terpene metabolism; oleoresin biosynthesis. In terms of biological role, involved in defensive oleoresin formation in conifers in response to insect attack or other injury. Involved in 52 sesquiterpene (C15) olefins biosynthesis. The chain is Gamma-humulene synthase (ag5) from Abies grandis (Grand fir).